Here is a 355-residue protein sequence, read N- to C-terminus: Probable butyrate kinase (355 aa).

This sequence belongs to the acetokinase family.

It is found in the cytoplasm. It catalyses the reaction butanoate + ATP = butanoyl phosphate + ADP. This chain is Probable butyrate kinase, found in Clostridium botulinum (strain Alaska E43 / Type E3).